We begin with the raw amino-acid sequence, 376 residues long: Putative F-box protein At2g33200 (376 aa).

Positions 6-53 (YDWSKLCHDILRLILESLHYKDYHRARTVCSNWYTASTTCKRPLYPWR) constitute an F-box domain.

The chain is Putative F-box protein At2g33200 from Arabidopsis thaliana (Mouse-ear cress).